A 557-amino-acid polypeptide reads, in one-letter code: Ribonuclease J 2 (557 aa).

The Zn(2+) site is built by His76, His78, His144, and Glu166. 366–370 (HASSH) contacts substrate.

Belongs to the metallo-beta-lactamase superfamily. RNA-metabolizing metallo-beta-lactamase-like family. Bacterial RNase J subfamily. Homodimer. Component of a possible RNA degradosome complex composed of cshA, eno, pfkA, pnp, rnjA, rnjB, rnpA and rny. Interacts specifically with RNase J1. It depends on Zn(2+) as a cofactor.

The protein resides in the cytoplasm. Its function is as follows. An RNase that has 5'-3' exonuclease and endonuclease activity, with the exonuclease activity probably being most important in vivo. Involved in maturation of 16S rRNA, rnpB (the RNA component of RNase P) maturation and degradation, and mRNA maturation and/or decay. This subunit probably plays a structural rather than enzymatic role as mutation of its putative active site gives no phenotype, and its deletion is partially complemented by inactive RNase J1. The polypeptide is Ribonuclease J 2 (Staphylococcus aureus (strain NCTC 8325 / PS 47)).